Here is a 228-residue protein sequence, read N- to C-terminus: Cytidylate kinase (228 aa).

ATP is bound at residue 11–19 (GPAGTGKSS).

Belongs to the cytidylate kinase family. Type 1 subfamily.

The protein resides in the cytoplasm. It catalyses the reaction CMP + ATP = CDP + ADP. The enzyme catalyses dCMP + ATP = dCDP + ADP. The chain is Cytidylate kinase from Mycolicibacterium paratuberculosis (strain ATCC BAA-968 / K-10) (Mycobacterium paratuberculosis).